Here is a 122-residue protein sequence, read N- to C-terminus: Large ribosomal subunit protein uL18 (122 aa).

It belongs to the universal ribosomal protein uL18 family. In terms of assembly, part of the 50S ribosomal subunit; part of the 5S rRNA/L5/L18/L25 subcomplex. Contacts the 5S and 23S rRNAs.

Functionally, this is one of the proteins that bind and probably mediate the attachment of the 5S RNA into the large ribosomal subunit, where it forms part of the central protuberance. This Desulforapulum autotrophicum (strain ATCC 43914 / DSM 3382 / VKM B-1955 / HRM2) (Desulfobacterium autotrophicum) protein is Large ribosomal subunit protein uL18.